The primary structure comprises 126 residues: Tachykinin-3 (126 aa).

The N-terminal stretch at 1–20 (MRSTLLFAVILALSSARSLG) is a signal peptide. The propeptide occupies 21 to 83 (AVCEESQEQV…VGPKESPLPQ (63 aa)). Met-95 is modified (methionine amide). Positions 99–126 (NLQPDTPVDINQENIPSFGTFKYPPSVE) are excised as a propeptide. Residues 102–126 (PDTPVDINQENIPSFGTFKYPPSVE) form a disordered region.

Belongs to the tachykinin family.

It localises to the secreted. Tachykinins are active peptides which excite neurons, evoke behavioral responses, are potent vasodilators and secretagogues, and contract (directly or indirectly) many smooth muscles. Is a critical central regulator of gonadal function. This Bos taurus (Bovine) protein is Tachykinin-3 (TAC3).